A 261-amino-acid polypeptide reads, in one-letter code: 3-deoxy-manno-octulosonate cytidylyltransferase 1 (261 aa).

This sequence belongs to the KdsB family.

It is found in the cytoplasm. The catalysed reaction is 3-deoxy-alpha-D-manno-oct-2-ulosonate + CTP = CMP-3-deoxy-beta-D-manno-octulosonate + diphosphate. It functions in the pathway nucleotide-sugar biosynthesis; CMP-3-deoxy-D-manno-octulosonate biosynthesis; CMP-3-deoxy-D-manno-octulosonate from 3-deoxy-D-manno-octulosonate and CTP: step 1/1. Its pathway is bacterial outer membrane biogenesis; lipopolysaccharide biosynthesis. Activates KDO (a required 8-carbon sugar) for incorporation into bacterial lipopolysaccharide in Gram-negative bacteria. The sequence is that of 3-deoxy-manno-octulosonate cytidylyltransferase 1 from Burkholderia lata (strain ATCC 17760 / DSM 23089 / LMG 22485 / NCIMB 9086 / R18194 / 383).